A 277-amino-acid chain; its full sequence is Raffinose operon transcriptional regulatory protein RafR (277 aa).

The HTH araC/xylS-type domain occupies 176–274 (NLAVSYLQEN…GASPSYYRKS (99 aa)). DNA-binding regions (H-T-H motif) lie at residues 193–214 (MDLC…KTHA) and 241–264 (VQSI…KRYS).

Functionally, involved in the regulation of the raffinose-operon. In Pediococcus pentosaceus, this protein is Raffinose operon transcriptional regulatory protein RafR (rafR).